The primary structure comprises 61 residues: Large ribosomal subunit protein bL32 (61 aa).

It belongs to the bacterial ribosomal protein bL32 family.

This Syntrophus aciditrophicus (strain SB) protein is Large ribosomal subunit protein bL32.